We begin with the raw amino-acid sequence, 238 residues long: N-(5'-phosphoribosyl)anthranilate isomerase (238 aa).

Belongs to the TrpF family.

It catalyses the reaction N-(5-phospho-beta-D-ribosyl)anthranilate = 1-(2-carboxyphenylamino)-1-deoxy-D-ribulose 5-phosphate. It functions in the pathway amino-acid biosynthesis; L-tryptophan biosynthesis; L-tryptophan from chorismate: step 3/5. The chain is N-(5'-phosphoribosyl)anthranilate isomerase from Methanosarcina acetivorans (strain ATCC 35395 / DSM 2834 / JCM 12185 / C2A).